Here is a 473-residue protein sequence, read N- to C-terminus: Probable glycine dehydrogenase (decarboxylating) subunit 2 (473 aa).

Residues 1-40 (MEHYEQARYAPAEGETNEPLLSENDQTTVSVDPSLPDDLT) are disordered. Lys-270 bears the N6-(pyridoxal phosphate)lysine mark.

This sequence belongs to the GcvP family. C-terminal subunit subfamily. As to quaternary structure, the glycine cleavage system is composed of four proteins: P, T, L and H. In this organism, the P 'protein' is a heterodimer of two subunits. Requires pyridoxal 5'-phosphate as cofactor.

The catalysed reaction is N(6)-[(R)-lipoyl]-L-lysyl-[glycine-cleavage complex H protein] + glycine + H(+) = N(6)-[(R)-S(8)-aminomethyldihydrolipoyl]-L-lysyl-[glycine-cleavage complex H protein] + CO2. Functionally, the glycine cleavage system catalyzes the degradation of glycine. The P protein binds the alpha-amino group of glycine through its pyridoxal phosphate cofactor; CO(2) is released and the remaining methylamine moiety is then transferred to the lipoamide cofactor of the H protein. In Halobacterium salinarum (strain ATCC 700922 / JCM 11081 / NRC-1) (Halobacterium halobium), this protein is Probable glycine dehydrogenase (decarboxylating) subunit 2.